The following is a 940-amino-acid chain: Coatomer subunit beta (940 aa).

HEAT repeat units lie at residues 11–48, 90–125, 126–162, and 310–347; these read FLEA…NGDS, QEMI…KEPE, LLDP…VSNH, and SILE…SRNV.

As to quaternary structure, oligomeric complex that consists of at least the alpha, beta, beta', gamma, delta, epsilon and zeta subunits.

It is found in the cytoplasm. It localises to the golgi apparatus membrane. The protein resides in the cytoplasmic vesicle. Its subcellular location is the COPI-coated vesicle membrane. In terms of biological role, the coatomer is a cytosolic protein complex that binds to dilysine motifs and reversibly associates with Golgi non-clathrin-coated vesicles, which further mediate biosynthetic protein transport from the ER, via the Golgi up to the trans Golgi network. Coatomer complex is required for budding from Golgi membranes, and is essential for the retrograde Golgi-to-ER transport of dilysine-tagged proteins. In Schizosaccharomyces pombe (strain 972 / ATCC 24843) (Fission yeast), this protein is Coatomer subunit beta (sec26).